The chain runs to 203 residues: ATP-dependent Clp protease proteolytic subunit (203 aa).

The active-site Nucleophile is the serine 107. Histidine 132 is an active-site residue.

It belongs to the peptidase S14 family. As to quaternary structure, fourteen ClpP subunits assemble into 2 heptameric rings which stack back to back to give a disk-like structure with a central cavity, resembling the structure of eukaryotic proteasomes.

Its subcellular location is the cytoplasm. The enzyme catalyses Hydrolysis of proteins to small peptides in the presence of ATP and magnesium. alpha-casein is the usual test substrate. In the absence of ATP, only oligopeptides shorter than five residues are hydrolyzed (such as succinyl-Leu-Tyr-|-NHMec, and Leu-Tyr-Leu-|-Tyr-Trp, in which cleavage of the -Tyr-|-Leu- and -Tyr-|-Trp bonds also occurs).. In terms of biological role, cleaves peptides in various proteins in a process that requires ATP hydrolysis. Has a chymotrypsin-like activity. Plays a major role in the degradation of misfolded proteins. This Thermotoga maritima (strain ATCC 43589 / DSM 3109 / JCM 10099 / NBRC 100826 / MSB8) protein is ATP-dependent Clp protease proteolytic subunit.